The following is a 409-amino-acid chain: L-cysteine:1D-myo-inositol 2-amino-2-deoxy-alpha-D-glucopyranoside ligase (409 aa).

Cys-43 serves as a coordination point for Zn(2+). L-cysteinyl-5'-AMP is bound by residues 43-46 (CGIT), Thr-58, and 81-83 (NVT). Positions 45–55 (ITPYDATHMGH) match the 'HIGH' region motif. The 'ERGGDP' region signature appears at 183 to 188 (ERGGDP). Residue Trp-224 participates in L-cysteinyl-5'-AMP binding. A Zn(2+)-binding site is contributed by Cys-228. 246-248 (GSD) contacts L-cysteinyl-5'-AMP. His-253 serves as a coordination point for Zn(2+). Val-280 is an L-cysteinyl-5'-AMP binding site. The 'KMSKS' region signature appears at 286–290 (KMSKS).

It belongs to the class-I aminoacyl-tRNA synthetase family. MshC subfamily. In terms of assembly, monomer. The cofactor is Zn(2+).

It catalyses the reaction 1D-myo-inositol 2-amino-2-deoxy-alpha-D-glucopyranoside + L-cysteine + ATP = 1D-myo-inositol 2-(L-cysteinylamino)-2-deoxy-alpha-D-glucopyranoside + AMP + diphosphate + H(+). Functionally, catalyzes the ATP-dependent condensation of GlcN-Ins and L-cysteine to form L-Cys-GlcN-Ins. This chain is L-cysteine:1D-myo-inositol 2-amino-2-deoxy-alpha-D-glucopyranoside ligase, found in Streptomyces griseus subsp. griseus (strain JCM 4626 / CBS 651.72 / NBRC 13350 / KCC S-0626 / ISP 5235).